The primary structure comprises 450 residues: FAD-dependent monooxygenase okaB (450 aa).

Residues isoleucine 14–glycine 34 form a helical membrane-spanning segment. Residues glutamate 43 and arginine 116 each contribute to the FAD site. Arginine 194 is an active-site residue. FAD contacts are provided by aspartate 318 and glycine 331.

This sequence belongs to the paxM FAD-dependent monooxygenase family.

Its subcellular location is the membrane. The catalysed reaction is cyclo(N(8)-(alpha,alpha-dimethylallyl)-L-Trp-6a-(alpha,alpha-dimethylallyl)-L-Trp) + AH2 + O2 = okaramine C + A + H2O. It functions in the pathway alkaloid biosynthesis. In terms of biological role, FAD-dependent monooxygenase; part of the gene cluster that mediates the biosynthesis of okaramine B, a prenylated indole alkaloid that possesses an unusual octacyclic ring system, including a four-membered azetidine ring and an eight-membered azocine ring, and that exhibits insecticidal activity against silkworm larvae. Within the pathway, okaC performs indole 2,3-epoxidation, facilitating the formation of the hexahydropyrrolo[2,3-b]indole (HPI) moiety of okaramine C. okaC then performs asymmetric reverse prenylation of cyclo(L-Trp-L-Trp) at N-1 and C-2' of the indole ring to produce the cyclic prenylated tryptophan dimer cyclo(N8-(alpha,alpha-dimethylallyl)-L-Trp-6a-(alpha,alpha-dime-thylallyl)-L-Trp). The biosynthesis begins with the NRPS okaA that condenses two tryptophan molecules into cyclo(L-Trp-L-Trp). Prenylation by the prenyltransferase okaC then leads to the formation of cyclo(N8-(alpha,alpha-dimethylallyl)-L-Trp-6a-(alpha,alpha-dime-thylallyl)-L-Trp). This is followed by indole 2,3-epoxidation by the FAD-dependent monooxygenase okaB to facilitate the formation of the hexahydropyrrolo[2,3-b]indole (HPI) moiety of okaramine C. The cytochrome P450 monooxygenase okaD then likely catalyzes formation of the eight-membered ring of okaramine A. The dioxygenase okaE further forms the unusual 2-dimethyl-3-methyl-azetidine ring to yield 12-deshydroxyl okaramine E, as well as the hydroxylation of 12-deshydroxyl okaramine E to produce okaramine E. The cytochrome P450 monoxygenase okaG converts 12-deshydroxyl okaramine E into 3-desmethyl okaramine B which is further methylated by the methyltransferase okaF into okaramine B. In a shunt pathway, okaG and okaF together are also able to convert okaramine E into okaramine D. Okaramine H is produced by nonenzymatic conversion from okaramine A. This Penicillium ochrochloron protein is FAD-dependent monooxygenase okaB.